Here is a 218-residue protein sequence, read N- to C-terminus: Large ribosomal subunit protein uL3 (218 aa).

This sequence belongs to the universal ribosomal protein uL3 family. Part of the 50S ribosomal subunit. Forms a cluster with proteins L14 and L19.

One of the primary rRNA binding proteins, it binds directly near the 3'-end of the 23S rRNA, where it nucleates assembly of the 50S subunit. The chain is Large ribosomal subunit protein uL3 from Syntrophus aciditrophicus (strain SB).